Here is a 410-residue protein sequence, read N- to C-terminus: Probable serine/threonine-protein kinase PBL9 (410 aa).

Residue Gly2 is the site of N-myristoyl glycine attachment. The S-palmitoyl cysteine moiety is linked to residue Cys4. The segment at 11–46 (AESSGASTKYDAKDIGSLGSKASSVSVRPSPRTEGE) is disordered. The Protein kinase domain maps to 68-352 (FRPDSVLGEG…MSEVVSHLEH (285 aa)). ATP contacts are provided by residues 74–82 (LGEGGFGCV) and Lys106. Residue Tyr151 is modified to Phosphotyrosine. The active-site Proton acceptor is Asp203. Residues Ser207 and Ser237 each carry the phosphoserine modification. Phosphothreonine is present on residues Thr238 and Thr243. A Phosphotyrosine modification is found at Tyr251.

This sequence belongs to the protein kinase superfamily. Ser/Thr protein kinase family. Interacts with the Xanthomonas campestris effector XopAC/AvrAC. As to expression, expressed in stomatal guard cells of leaves.

It is found in the cell membrane. The catalysed reaction is L-seryl-[protein] + ATP = O-phospho-L-seryl-[protein] + ADP + H(+). It carries out the reaction L-threonyl-[protein] + ATP = O-phospho-L-threonyl-[protein] + ADP + H(+). Possible bi-functional kinase. In vitro, it exhibits serine/threonine activity. In vivo, can phosphorylate tyrosine residues of limited substrates. May be involved in plant defense signaling. In Arabidopsis thaliana (Mouse-ear cress), this protein is Probable serine/threonine-protein kinase PBL9.